A 362-amino-acid chain; its full sequence is ATPase ARSA2 (362 aa).

27-34 (KGGVGKTT) contributes to the ATP binding site. Aspartate 58 is a catalytic residue. Residues glutamate 235 and asparagine 262 each coordinate ATP.

It belongs to the arsA ATPase family. As to quaternary structure, homodimer. Interacts with SEC61B.

The protein localises to the cytoplasm. The protein resides in the cytosol. It is found in the endoplasmic reticulum. Functionally, ATPase required for the post-translational delivery of tail-anchored (TA) proteins to the endoplasmic reticulum. Recognizes and selectively binds the transmembrane domain of TA proteins in the cytosol. This complex then targets to the endoplasmic reticulum by membrane-bound receptors, where the tail-anchored protein is released for insertion. This process is regulated by ATP binding and hydrolysis. ATP binding drives the homodimer towards the closed dimer state, facilitating recognition of newly synthesized TA membrane proteins. ATP hydrolysis is required for insertion. Subsequently, the homodimer reverts towards the open dimer state, lowering its affinity for the membrane-bound receptor, and returning it to the cytosol to initiate a new round of targeting. This is ATPase ARSA2 from Chlamydomonas reinhardtii (Chlamydomonas smithii).